Reading from the N-terminus, the 150-residue chain is Large ribosomal subunit protein uL13 (150 aa).

It belongs to the universal ribosomal protein uL13 family. Part of the 50S ribosomal subunit.

Functionally, this protein is one of the early assembly proteins of the 50S ribosomal subunit, although it is not seen to bind rRNA by itself. It is important during the early stages of 50S assembly. The polypeptide is Large ribosomal subunit protein uL13 (Chlamydia caviae (strain ATCC VR-813 / DSM 19441 / 03DC25 / GPIC) (Chlamydophila caviae)).